Consider the following 415-residue polypeptide: Putative O-antigen transporter (415 aa).

Topologically, residues 1–11 (MNTNKLSLRRN) are cytoplasmic. A helical transmembrane segment spans residues 12-32 (VIYLAVVQGSNYLLPLLTFPY). Over 33-41 (LVRTLGPEN) the chain is Periplasmic. A helical membrane pass occupies residues 42–62 (FGIFGFCQATMLYMIMFVEYG). Residues 63–83 (FNLTATQSIAKAADSKDKVTS) lie on the Cytoplasmic side of the membrane. A helical transmembrane segment spans residues 84 to 104 (IFWAVIFSKIVLIVITLIFLT). Residues 105 to 117 (SMTLLVPEYNKHA) are Periplasmic-facing. A helical transmembrane segment spans residues 118-138 (VIIWSFVPALVGNLIYPIWLF). The Cytoplasmic segment spans residues 139 to 173 (QGKEKMKWLTLSSILSRLAIIPLTFIFVNTKSDIA). A helical membrane pass occupies residues 174–194 (IAGFIQSSANLVAGIIALAIV). Residues 195 to 220 (VHEGWIGKVTLSLHNVRRSLADGFHV) are Periplasmic-facing. Residues 221 to 241 (FISTSAISLYSTGIVIILGFI) traverse the membrane as a helical segment. The Cytoplasmic portion of the chain corresponds to 242 to 295 (SGPTSVGNFNAANTIRNALQGLLNPITQAIYPRISSTLVLNRVKGVILIKKSLT). The chain crosses the membrane as a helical span at residues 296–316 (CLSLIGGAFSLILLLGASILV). Topologically, residues 317–328 (KISIGPGYDNAV) are periplasmic. A helical membrane pass occupies residues 329–349 (IVLMIISPLPFLISLSNVYGI). Residues 350–362 (QVMLTHNYKKEFS) are Cytoplasmic-facing. The helical transmembrane segment at 363–383 (KILIAAGLLSLLLIFPLTTLF) threads the bilayer. Residues 384 to 385 (KE) lie on the Periplasmic side of the membrane. Residues 386 to 406 (IGAAITLLATECLVTSLMLMF) traverse the membrane as a helical segment. The Cytoplasmic portion of the chain corresponds to 407 to 415 (VRNNKLLVC).

This sequence belongs to the polysaccharide synthase family.

The protein localises to the cell inner membrane. Its pathway is bacterial outer membrane biogenesis; LPS O-antigen biosynthesis. May be involved in the translocation process of the nascent O-polysaccharide molecules and/or its ligation to lipid A core units. The protein is Putative O-antigen transporter (rfbX) of Escherichia coli (strain K12).